The following is a 755-amino-acid chain: Diamine oxidase [copper-containing] (755 aa).

Positions 1-24 (MGRGTLALGWAGAALLLLQMLAAA) are cleaved as a signal peptide. Residue Asn115 is glycosylated (N-linked (GlcNAc...) asparagine). A disulfide bond links Cys182 and Cys186. The Proton acceptor role is filled by Asp376. An intrachain disulfide couples Cys394 to Cys420. Tyr464 acts as the Schiff-base intermediate with substrate; via topaquinone in catalysis. At Tyr464 the chain carries 2',4',5'-topaquinone. Cu(2+) contacts are provided by His513 and His515. Positions 522, 523, and 524 each coordinate Ca(2+). Asn541 is a glycosylation site (N-linked (GlcNAc...) asparagine). Ca(2+) is bound by residues Glu565, Phe656, Asn659, Glu661, Asp667, and Leu668. His678 serves as a coordination point for Cu(2+). N-linked (GlcNAc...) asparagine glycosylation occurs at Asn749.

The protein belongs to the copper/topaquinone oxidase family. As to quaternary structure, homodimer; disulfide-linked. The cofactor is Cu(2+). It depends on Ca(2+) as a cofactor. Requires L-topaquinone as cofactor. Topaquinone (TPQ) is generated by copper-dependent autoxidation of a specific tyrosyl residue. In terms of processing, N-glycosylated; the glycans are primarily linear, di-, or tribranched fucosylated complex type.

Its subcellular location is the secreted. It is found in the extracellular space. The protein localises to the cell membrane. The catalysed reaction is histamine + O2 + H2O = imidazole-4-acetaldehyde + H2O2 + NH4(+). It catalyses the reaction N(tau)-methylhistamine + O2 + H2O = 1-methylimidazole-4-acetaldehyde + H2O2 + NH4(+). It carries out the reaction putrescine + O2 + H2O = 4-aminobutanal + H2O2 + NH4(+). The enzyme catalyses cadaverine + O2 + H2O = 5-aminopentanal + H2O2 + NH4(+). Its activity is regulated as follows. Inhibited by amiloride and amiloride analogs. In terms of biological role, catalyzes the oxidative deamination of primary amines to the corresponding aldehydes with the concomitant production of hydrogen peroxide and ammonia. Its preferred substrates in vitro are the diamines histamine and 1-methylhistamine and it could therefore play a role in allergic and immune responses. Has a broad specificity for diamines and can also act on cadaverine and putrescine, two products of amino acid catabolism. It could also act on polyamines, like spermidine and spermine though less efficiently, and regulate various biological processes. The protein is Diamine oxidase [copper-containing] of Sus scrofa (Pig).